An 859-amino-acid polypeptide reads, in one-letter code: Leucine--tRNA ligase (859 aa).

The 'HIGH' region motif lies at P42 to H52. Residues K618 to S622 carry the 'KMSKS' region motif. K621 is a binding site for ATP.

This sequence belongs to the class-I aminoacyl-tRNA synthetase family.

The protein localises to the cytoplasm. It carries out the reaction tRNA(Leu) + L-leucine + ATP = L-leucyl-tRNA(Leu) + AMP + diphosphate. This is Leucine--tRNA ligase from Shewanella baltica (strain OS223).